The chain runs to 468 residues: MTQQIGVIGLAVMGKNLAWNIESHGYSVSVFNRSSEKTDLMVEESKGKNIHPTYSLEEFVNSLEKPRKILLMVQAGKATDATIDSLLPLLDDGDILIDGGNTNYQDTIRRNKALAQSAINFIGMGVSGGEIGALTGPSLMPGGQEEAYNKVADILDAIAAKAKDGASCVTYIGPNGAGHYVKMVHNGIEYADMQLIAESYAMMKELLGMSHEDIAQTFKDWNAGELESYLIEITGDIFMKLDENKEALVEKILDTAGQKGTGKWTSINALELGIPLTIITESVFARFISSIKEERVNASKELNGPKASFDGDKKDFLEKIRKALYMSKICSYAQGFAQMRKASEDNEWNLKLGDLAMIWREGCIIRAQFLQKIKDAYDNNPGLQNLLLDPYFKNIVTEYQDALRDVVATGVQNGVPTPGFSSSINYYDSYRAADLPANLIQAQRDYFGAHTYERKDKEGVFHTQWIEE.

Residues 9–14, 32–34, 73–75, and asparagine 101 each bind NADP(+); these read GLAVMG, NRS, and VQA. Residues asparagine 101 and 127 to 129 each bind substrate; that span reads SGG. Catalysis depends on lysine 182, which acts as the Proton acceptor. 185–186 contributes to the substrate binding site; the sequence is HN. Catalysis depends on glutamate 189, which acts as the Proton donor. Residues tyrosine 190, lysine 259, arginine 286, arginine 444, and histidine 450 each contribute to the substrate site.

Belongs to the 6-phosphogluconate dehydrogenase family. Homodimer.

It catalyses the reaction 6-phospho-D-gluconate + NADP(+) = D-ribulose 5-phosphate + CO2 + NADPH. It functions in the pathway carbohydrate degradation; pentose phosphate pathway; D-ribulose 5-phosphate from D-glucose 6-phosphate (oxidative stage): step 3/3. Functionally, catalyzes the oxidative decarboxylation of 6-phosphogluconate to ribulose 5-phosphate and CO(2), with concomitant reduction of NADP to NADPH. The chain is 6-phosphogluconate dehydrogenase, decarboxylating (gnd) from Staphylococcus aureus (strain Mu50 / ATCC 700699).